The following is a 200-amino-acid chain: Transcription factor FapR (200 aa).

This sequence belongs to the FapR family.

Transcriptional factor involved in regulation of membrane lipid biosynthesis by repressing genes involved in fatty acid and phospholipid metabolism. The protein is Transcription factor FapR of Caldanaerobacter subterraneus subsp. tengcongensis (strain DSM 15242 / JCM 11007 / NBRC 100824 / MB4) (Thermoanaerobacter tengcongensis).